A 202-amino-acid polypeptide reads, in one-letter code: Small ribosomal subunit protein uS4c (202 aa).

Residues methionine 90 to tyrosine 152 enclose the S4 RNA-binding domain.

The protein belongs to the universal ribosomal protein uS4 family. Part of the 30S ribosomal subunit. Contacts protein S5. The interaction surface between S4 and S5 is involved in control of translational fidelity.

It localises to the plastid. The protein localises to the chloroplast. One of the primary rRNA binding proteins, it binds directly to 16S rRNA where it nucleates assembly of the body of the 30S subunit. In terms of biological role, with S5 and S12 plays an important role in translational accuracy. In Emiliania huxleyi (Coccolithophore), this protein is Small ribosomal subunit protein uS4c (rps4).